An 85-amino-acid chain; its full sequence is Large ribosomal subunit protein bL27 (85 aa).

The segment at Met-1 to Leu-21 is disordered.

This sequence belongs to the bacterial ribosomal protein bL27 family.

In Chromohalobacter salexigens (strain ATCC BAA-138 / DSM 3043 / CIP 106854 / NCIMB 13768 / 1H11), this protein is Large ribosomal subunit protein bL27.